We begin with the raw amino-acid sequence, 419 residues long: UDP-N-acetylglucosamine 1-carboxyvinyltransferase (419 aa).

22–23 (KN) serves as a coordination point for phosphoenolpyruvate. Position 93 (Arg93) interacts with UDP-N-acetyl-alpha-D-glucosamine. The Proton donor role is filled by Cys117. The residue at position 117 (Cys117) is a 2-(S-cysteinyl)pyruvic acid O-phosphothioketal. Residues 122-126 (RPVDQ), Asp305, and Ile327 each bind UDP-N-acetyl-alpha-D-glucosamine.

It belongs to the EPSP synthase family. MurA subfamily.

It is found in the cytoplasm. The enzyme catalyses phosphoenolpyruvate + UDP-N-acetyl-alpha-D-glucosamine = UDP-N-acetyl-3-O-(1-carboxyvinyl)-alpha-D-glucosamine + phosphate. It functions in the pathway cell wall biogenesis; peptidoglycan biosynthesis. In terms of biological role, cell wall formation. Adds enolpyruvyl to UDP-N-acetylglucosamine. The polypeptide is UDP-N-acetylglucosamine 1-carboxyvinyltransferase (Dichelobacter nodosus (strain VCS1703A)).